Consider the following 368-residue polypeptide: tRNA(Met) cytidine acetate ligase (368 aa).

ATP contacts are provided by residues 7 to 20, Gly-96, Asn-152, and Arg-175; that span reads IAEFNPFHNGHKYL.

This sequence belongs to the TmcAL family.

Its subcellular location is the cytoplasm. It catalyses the reaction cytidine(34) in elongator tRNA(Met) + acetate + ATP = N(4)-acetylcytidine(34) in elongator tRNA(Met) + AMP + diphosphate. Its function is as follows. Catalyzes the formation of N(4)-acetylcytidine (ac(4)C) at the wobble position of elongator tRNA(Met), using acetate and ATP as substrates. First activates an acetate ion to form acetyladenylate (Ac-AMP) and then transfers the acetyl group to tRNA to form ac(4)C34. This Streptococcus pyogenes serotype M49 (strain NZ131) protein is tRNA(Met) cytidine acetate ligase.